The primary structure comprises 344 residues: uncharacterized protein (344 aa).

Belongs to the glycosyltransferase 28 family.

This is an uncharacterized protein from Methanopyrus kandleri (strain AV19 / DSM 6324 / JCM 9639 / NBRC 100938).